The chain runs to 239 residues: MEYQRAIDSIEECLNKQLRLSSEKVDQYVLIENWTSLVGHLKTLHSLISNYTNGRELQNEISSLLKQDKELDLQIQDCMREMTSIYDTHLPKTVSGRKRQKVNAETLLDYGRKLSKFSSAPPGYNPETGQDAKAPVHYPWPSEDQMRKTLLFQFSTSMVPNLSATASQLFSEQPPKTNEPTETETEIDANKAVEEKTKMNYPASPTFTTQEENKEVESPANKDVFAGFDLFDPEMEEDF.

The interval 168 to 221 (QLFSEQPPKTNEPTETETEIDANKAVEEKTKMNYPASPTFTTQEENKEVESPAN) is disordered. Over residues 188–198 (DANKAVEEKTK) the composition is skewed to basic and acidic residues. Phosphoserine is present on residues Ser204 and Ser218.

The protein belongs to the Mediator complex subunit 4 family. As to quaternary structure, component of the Mediator complex.

It is found in the nucleus. Functionally, component of the Mediator complex, a coactivator involved in the regulated transcription of nearly all RNA polymerase II-dependent genes. Mediator functions as a bridge to convey information from gene-specific regulatory proteins to the basal RNA polymerase II transcription machinery. Mediator is recruited to promoters by direct interactions with regulatory proteins and serves as a scaffold for the assembly of a functional preinitiation complex with RNA polymerase II and the general transcription factors. The chain is Mediator of RNA polymerase II transcription subunit 4 (med4) from Schizosaccharomyces pombe (strain 972 / ATCC 24843) (Fission yeast).